Consider the following 558-residue polypeptide: MCRFVDAIKSLLDESDITTLVALANRLSPFRVDYRRVVVGDALSVKPILVLEHEQPPCDGAWRSAAHINLGLGAAQQQHHPVPTRAVHGAAVGGVQCDGLASPPVSNNVMSDGTVDGDDDDLGYDQDTLYNQGTDYENEGGAVGQDGLPAPDAGLFQECMFSHRSASTPRAGGHGESYCQEVAQSSHAITCRELLERCILPNFEINHLENCESSTSGGIHHCLPDEHSGMTGLARNTPSASPVENSITVELDGALEIATDVRTGKFNTLRAAKRHRRNTSSLRLSSHDAGCVGDARSSAGVVKSPARRSTAVSDAALRKVKYAARTCIRADYFQFLEANLPRWVRDGIWGKEWSPNQTANVDGYENLQKAYWHVCRLDRQMRDDAIRSRMAMVLLHLEYENTCLSWKTCAHSGKKPVTKVGRGNISSLIDNIIENTHPEWRTADPGERSELRAKFHDRKRYGKRWWMLVKPLGSSILMLCSSKFAGMIKNTTVTAAMINEIKLAIQRSETGLMSLLSLANPIAESLFLDQGYDGHNAEQVLKALRAARLEVAPGEGVA.

It belongs to the POU transcription factor family. Class-3 subfamily.

The protein localises to the nucleus. Transcription factor that regulates the expression of the gene cluster that mediates the biosynthesis of aurovertins, fungal polyketides that exhibit potent inhibition of adenosine triphosphate synthase. This is Aurovertin biosynthesis cluster transcription factor aurF from Calcarisporium arbuscula (Dendryphion arbuscula).